Consider the following 488-residue polypeptide: Probable glycine dehydrogenase (decarboxylating) subunit 2 (488 aa).

Lys273 is modified (N6-(pyridoxal phosphate)lysine).

It belongs to the GcvP family. C-terminal subunit subfamily. The glycine cleavage system is composed of four proteins: P, T, L and H. In this organism, the P 'protein' is a heterodimer of two subunits. Pyridoxal 5'-phosphate is required as a cofactor.

The enzyme catalyses N(6)-[(R)-lipoyl]-L-lysyl-[glycine-cleavage complex H protein] + glycine + H(+) = N(6)-[(R)-S(8)-aminomethyldihydrolipoyl]-L-lysyl-[glycine-cleavage complex H protein] + CO2. The glycine cleavage system catalyzes the degradation of glycine. The P protein binds the alpha-amino group of glycine through its pyridoxal phosphate cofactor; CO(2) is released and the remaining methylamine moiety is then transferred to the lipoamide cofactor of the H protein. In Halalkalibacterium halodurans (strain ATCC BAA-125 / DSM 18197 / FERM 7344 / JCM 9153 / C-125) (Bacillus halodurans), this protein is Probable glycine dehydrogenase (decarboxylating) subunit 2.